We begin with the raw amino-acid sequence, 359 residues long: Methionine import ATP-binding protein MetN (359 aa).

A disordered region spans residues methionine 1 to glycine 21. Positions valine 24–valine 264 constitute an ABC transporter domain. Residue glycine 61–serine 68 participates in ATP binding.

The protein belongs to the ABC transporter superfamily. Methionine importer (TC 3.A.1.24) family. As to quaternary structure, the complex is composed of two ATP-binding proteins (MetN), two transmembrane proteins (MetI) and a solute-binding protein (MetQ).

It localises to the cell membrane. The catalysed reaction is L-methionine(out) + ATP + H2O = L-methionine(in) + ADP + phosphate + H(+). The enzyme catalyses D-methionine(out) + ATP + H2O = D-methionine(in) + ADP + phosphate + H(+). Part of the ABC transporter complex MetNIQ involved in methionine import. Responsible for energy coupling to the transport system. The sequence is that of Methionine import ATP-binding protein MetN from Corynebacterium efficiens (strain DSM 44549 / YS-314 / AJ 12310 / JCM 11189 / NBRC 100395).